The sequence spans 460 residues: Serine incorporator 5 (460 aa).

The Extracellular portion of the chain corresponds to 1–36 (MCTPCCVSQLACCCGSAACSLCCGCCPKIKQSTSTR). The helical transmembrane segment at 37–57 (FMYALFFMLVTVTCVIMMSPT) threads the bilayer. The Cytoplasmic segment spans residues 58 to 89 (VEMAMREHIPFYSQMCQQLNAGENCSTLVGYS). The chain crosses the membrane as a helical span at residues 90–110 (AVYKVCFGMACFFFFFAVFTI). Residues 111-124 (RVQNSTGCRAAVHN) lie on the Extracellular side of the membrane. Asn-114 carries N-linked (GlcNAc...) asparagine glycosylation. The chain crosses the membrane as a helical span at residues 125–145 (GFWFFKFVALLACCAGGFFLP). Over 146-156 (NQDQFLEVWRY) the chain is Cytoplasmic. The helical transmembrane segment at 157-177 (VGAAGGFLFIIIQLMLLVQFA) threads the bilayer. The Extracellular segment spans residues 178-197 (HRWNQNWSSGATYNKLWYAA). A glycan (N-linked (GlcNAc...) asparagine) is linked at Asn-183. Residues 198-218 (LALVTLVLFSVAVGGMVFMFM) traverse the membrane as a helical segment. At 219–230 (YYTHPEACFLNK) the chain is on the cytoplasmic side. The chain crosses the membrane as a helical span at residues 231–251 (IFLGVNGGLCFIVSLLAISPC). The Extracellular portion of the chain corresponds to 252 to 259 (IQTFQPTS). A helical transmembrane segment spans residues 260–280 (GLLQPAVITLYVMYLTFSALA). Residues 281 to 311 (SKPIEMVEDEIKGNITVCVFPFKSGLKSDTN) lie on the Cytoplasmic side of the membrane. A helical membrane pass occupies residues 312–332 (IVTGVGTAILFCCILYSCLIS). The Extracellular portion of the chain corresponds to 333–391 (TTKRSSAALQVYRNDMPENERARCCFCWVDDTEDYDDEKTSGGQNVKYDERDGTVYSYC). The chain crosses the membrane as a helical span at residues 392-412 (FFHFVFFLGSLYVMMTVTNWF). At 413–433 (HYDNAKIERLLEGSWSVFWIK) the chain is on the cytoplasmic side. A helical transmembrane segment spans residues 434–454 (MASSWVCLFFYMWTLVVPMLF). Residues 455 to 460 (PQRFQA) lie on the Extracellular side of the membrane.

It belongs to the TDE1 family.

The protein resides in the cell membrane. The catalysed reaction is a 1,2-diacyl-sn-glycero-3-phospho-L-serine(in) = a 1,2-diacyl-sn-glycero-3-phospho-L-serine(out). It carries out the reaction a 1,2-diacyl-sn-glycero-3-phosphocholine(in) = a 1,2-diacyl-sn-glycero-3-phosphocholine(out). The enzyme catalyses a 1,2-diacyl-sn-glycero-3-phosphoethanolamine(in) = a 1,2-diacyl-sn-glycero-3-phosphoethanolamine(out). Its function is as follows. Restriction factor required to restrict infectivity of gammaretroviruses: acts by inhibiting an early step of viral infection. Impairs the penetration of the viral particle into the cytoplasm. Non-ATP-dependent, non-specific lipid transporter for phosphatidylserine, phosphatidylcholine, and phosphatidylethanolamine. Functions as a scramblase that flips lipids in both directions across the membrane. Phospholipid scrambling results in gammaretroviral surface exposure of phosphatidylserine and loss of membrane asymmetry, which leads to loss of infectivity. Enhances the incorporation of serine into phosphatidylserine and sphingolipids. The sequence is that of Serine incorporator 5 (serinc5) from Danio rerio (Zebrafish).